Here is a 365-residue protein sequence, read N- to C-terminus: MINLGDKHSTIVVAMSGGVDSSAVAAMLHEQGHNVIGITLQLYDHGMAVGKKNACCAGQDIYDAKMVANKLGIPHYVLDYESKFKESVIDNFVDSYLQGETPLPCVQCNNSVKFRDLIKTARELGASQLATGHYVRKVSGDNGVELHTGLDPAKDQSYFLFTTTKEQLEYLSFPLGWFTKDETRKLASKFGLEVAYKPDSQDICFVPDGNYKSVINTIRPNASESGKIIHINGFALGEHSGIINYTIGQRRGLGIAYNEPLYVVKIDPKDNIVYVGPEAALHVQEFIIKDVNWLADEIKDNKKLEVAVKIRSTRPPRLAAISKLGDDKMKIRFLSAEKAVAPGQACVIYAGERVLGGGWITRDIR.

Residues 14–21 and Leu-40 contribute to the ATP site; that span reads AMSGGVDS. Cys-108 serves as the catalytic Nucleophile. The cysteines at positions 108 and 204 are disulfide-linked. Position 132 (Gly-132) interacts with ATP. An interaction with tRNA region spans residues 154–156; that stretch reads KDQ. The active-site Cysteine persulfide intermediate is Cys-204.

This sequence belongs to the MnmA/TRMU family.

The protein localises to the cytoplasm. The enzyme catalyses S-sulfanyl-L-cysteinyl-[protein] + uridine(34) in tRNA + AH2 + ATP = 2-thiouridine(34) in tRNA + L-cysteinyl-[protein] + A + AMP + diphosphate + H(+). In terms of biological role, catalyzes the 2-thiolation of uridine at the wobble position (U34) of tRNA, leading to the formation of s(2)U34. The polypeptide is tRNA-specific 2-thiouridylase MnmA (Rickettsia akari (strain Hartford)).